The primary structure comprises 217 residues: 7-cyano-7-deazaguanine synthase (217 aa).

Leu-7–Leu-17 provides a ligand contact to ATP. Zn(2+) is bound by residues Cys-183, Cys-191, Cys-194, and Cys-197.

This sequence belongs to the QueC family. The cofactor is Zn(2+).

The catalysed reaction is 7-carboxy-7-deazaguanine + NH4(+) + ATP = 7-cyano-7-deazaguanine + ADP + phosphate + H2O + H(+). It functions in the pathway purine metabolism; 7-cyano-7-deazaguanine biosynthesis. Catalyzes the ATP-dependent conversion of 7-carboxy-7-deazaguanine (CDG) to 7-cyano-7-deazaguanine (preQ(0)). This is 7-cyano-7-deazaguanine synthase from Methanoregula boonei (strain DSM 21154 / JCM 14090 / 6A8).